A 130-amino-acid polypeptide reads, in one-letter code: WAP four-disulfide core domain protein 3 (130 aa).

Positions 1–16 (MKALLALGFLASWVAA) are cleaved as a signal peptide. WAP domains are found at residues 17 to 61 (GEHA…RGDI) and 62 to 106 (EGGR…IPGL). 8 disulfides stabilise this stretch: C25-C49, C32-C53, C36-C48, C42-C57, C69-C94, C77-C98, C81-C93, and C87-C102. Residue N116 is glycosylated (N-linked (GlcNAc...) asparagine).

Its subcellular location is the secreted. This is WAP four-disulfide core domain protein 3 (Wfdc3) from Mus musculus (Mouse).